The chain runs to 887 residues: ATP-dependent DNA helicase srs2 (887 aa).

The 296-residue stretch at 9-304 (KFLNEEQRIS…LHLERNYRSA (296 aa)) folds into the UvrD-like helicase ATP-binding domain. ATP contacts are provided by residues 33 to 38 (GSGKTR) and Arg302. The region spanning 305–597 (KPILELALSI…TISTLHAAKG (293 aa)) is the UvrD-like helicase C-terminal domain.

Belongs to the helicase family. UvrD subfamily.

It localises to the nucleus. The catalysed reaction is Couples ATP hydrolysis with the unwinding of duplex DNA by translocating in the 3'-5' direction.. It catalyses the reaction ATP + H2O = ADP + phosphate + H(+). In terms of biological role, ATP-dependent DNA helicase involved in DNA repair at least for UV-induced lesions. Also aids the recombinational repair of camptothecin-induced collapsed replication forks. The chain is ATP-dependent DNA helicase srs2 (srs2) from Schizosaccharomyces pombe (strain 972 / ATCC 24843) (Fission yeast).